The sequence spans 698 residues: MADRRRQRASQDTEDEESGASGSDSGSPARGGGSCSGSVGGGGSGSLPSQRGGRGGGLHLRRVESGGAKSAEESECESEDGMEGDAVLSDYESAEDSEGEEDYSEEENSKVELKSEANDAADSSAKEKGEEKPESKGTVTGERQSGDGQESTEPVENKVGKKGPKHLDDDEDRKNPAYIPRKGLFFEHDLRGQTQEEEVRPKGRQRKLWKDEGRWEHDKFREDEQAPKSRQELIALYGYDIRSAHNPDDIKPRRIRKPRFGSSPQRDPNWIGDRSSKSHRHQGPGGNLPPRTFINRNTAGTGRMSASRNYSRSGGFKDGRTSFRPVEVAGQHGGRSAETLKHEASYRSRRLEQTPVRDPSPEPDAPLLGSPEKEEVASETPAAVPDITPPAPDRPIEKKSYSRARRTRTKVGDAVKAAEEVPPPSEGLASTATVPETTPAAKTGNWEAPVDSTTGGLEQDVAQLNIAEQSWSPSQPSFLQPRELRGVPNHIHMGAGPPPQFNRMEEMGVQSGRAKRYSSQRQRPVPEPPAPPVHISIMEGHYYDPLQFQGPIYTHGDSPAPLPPQGMIVQPEMHLPHPGLHPHQSPGPLPNPGLYPPPVSMSPGQPPPQQLLAPTYFSAPGVMNFGNPNYPYAPGALPPPPPPHLYPNTQAPPQVYGGVTYYNPAQQQVQPKPSPPRRTPQPVSIKPPPPEVVSRGSS.

2 disordered regions span residues 1 to 229 (MADR…APKS) and 241 to 457 (IRSA…TGGL). The span at 19–28 (GASGSDSGSP) shows a compositional bias: low complexity. A compositionally biased stretch (gly residues) spans 29 to 45 (ARGGGSCSGSVGGGGSG). Phosphoserine is present on S34. 2 stretches are compositionally biased toward acidic residues: residues 73–83 (ESECESEDGME) and 92–106 (ESAE…YSEE). The stretch at 98–127 (EGEEDYSEEENSKVELKSEANDAADSSAKE) forms a coiled coil. Basic and acidic residues-rich tracts occupy residues 107-117 (ENSKVELKSEA) and 124-135 (SAKEKGEEKPES). The residue at position 115 (S115) is a Phosphoserine. The segment at 134-280 (ESKGTVTGER…IGDRSSKSHR (147 aa)) is necessary for RNA-binding, interaction with MAGOH and localization in nucleus speckles. Residues 134 to 280 (ESKGTVTGER…IGDRSSKSHR (147 aa)) form a sufficient to form the EJC region. Over residues 137-154 (GTVTGERQSGDGQESTEP) the composition is skewed to polar residues. S145 carries the phosphoserine modification. Positions 155-175 (VENKVGKKGPKHLDDDEDRKN) are enriched in basic and acidic residues. The Nuclear localization signal 1 motif lies at 201–207 (PKGRQRK). 2 stretches are compositionally biased toward basic and acidic residues: residues 208–229 (LWKD…APKS) and 242–252 (RSAHNPDDIKP). The Nuclear localization signal 2 motif lies at 251-259 (KPRRIRKPR). Phosphoserine is present on residues S262 and S263. The span at 294 to 312 (INRNTAGTGRMSASRNYSR) shows a compositional bias: polar residues. Residues 338-352 (ETLKHEASYRSRRLE) show a composition bias toward basic and acidic residues. At T354 the chain carries Phosphothreonine. 2 positions are modified to phosphoserine: S360 and S370. Residues 374–698 (EEVASETPAA…PPEVVSRGSS (325 aa)) form a necessary for localization in cytoplasmic stress granules region. The span at 410–419 (KVGDAVKAAE) shows a compositional bias: basic and acidic residues. Positions 457 to 466 (LEQDVAQLNI) match the Nuclear export signal motif. Residue S472 is modified to Phosphoserine. Disordered regions lie at residues 488-533 (PNHI…APPV), 575-614 (LPHP…LLAP), and 629-698 (NYPY…RGSS). 3 stretches are compositionally biased toward pro residues: residues 585–609 (SPGP…PPPQ), 636–645 (ALPPPPPPHL), and 672–691 (KPSP…PPPE).

This sequence belongs to the CASC3 family. As to quaternary structure, identified in the spliceosome C complex. Component of the mRNA splicing-dependent exon junction complex (EJC), which contains at least CASC3, EIF4A3, MAGOH, NXF1 and RBM8A/Y14. Identified in a complex composed of the EJC core, UPF3B and UPF2. The EJC core can also interact with UPF3A (in vitro). Forms homooligomers. Interacts with STAU in an RNA-dependent manner. Interacts with DHX34; the interaction is RNA-independent. ADP-ribosylated by tankyrase TNKS and TNKS2. Poly-ADP-ribosylated protein is recognized by RNF146, followed by ubiquitination. In terms of processing, ubiquitinated by RNF146 when poly-ADP-ribosylated, leading to its degradation. As to expression, high levels in heart, brain, including hippocampus and cerebellum, liver, kidney and testis; lower levels in muscle, lung and spleen.

It is found in the cytoplasm. Its subcellular location is the perinuclear region. The protein localises to the nucleus. It localises to the nucleus speckle. The protein resides in the stress granule. It is found in the cytoplasmic ribonucleoprotein granule. Its subcellular location is the cell projection. The protein localises to the dendrite. In terms of biological role, required for pre-mRNA splicing as component of the spliceosome. Core component of the splicing-dependent multiprotein exon junction complex (EJC) deposited at splice junctions on mRNAs. The EJC is a dynamic structure consisting of core proteins and several peripheral nuclear and cytoplasmic associated factors that join the complex only transiently either during EJC assembly or during subsequent mRNA metabolism. The EJC marks the position of the exon-exon junction in the mature mRNA for the gene expression machinery and the core components remain bound to spliced mRNAs throughout all stages of mRNA metabolism thereby influencing downstream processes including nuclear mRNA export, subcellular mRNA localization, translation efficiency and nonsense-mediated mRNA decay (NMD). Stimulates the ATPase and RNA-helicase activities of EIF4A3. Plays a role in the stress response by participating in cytoplasmic stress granules assembly and by favoring cell recovery following stress. Component of the dendritic ribonucleoprotein particles (RNPs) in hippocampal neurons. May play a role in mRNA transport. Binds spliced mRNA in sequence-independent manner, 20-24 nucleotides upstream of mRNA exon-exon junctions. Binds poly(G) and poly(U) RNA homomer. The polypeptide is Protein CASC3 (Casc3) (Mus musculus (Mouse)).